The sequence spans 395 residues: S-adenosylmethionine synthase (395 aa).

ATP is bound at residue histidine 12. Aspartate 14 contributes to the Mg(2+) binding site. Glutamate 40 contributes to the K(+) binding site. L-methionine contacts are provided by glutamate 53 and glutamine 96. The segment at 96–106 is flexible loop; sequence QSKEIADAVNF. ATP is bound by residues 174–176, 242–243, aspartate 251, 257–258, alanine 274, and lysine 278; these read DGK, RF, and RK. Position 251 (aspartate 251) interacts with L-methionine. An L-methionine-binding site is contributed by lysine 282.

It belongs to the AdoMet synthase family. As to quaternary structure, homotetramer; dimer of dimers. It depends on Mg(2+) as a cofactor. The cofactor is K(+).

The protein resides in the cytoplasm. It carries out the reaction L-methionine + ATP + H2O = S-adenosyl-L-methionine + phosphate + diphosphate. It functions in the pathway amino-acid biosynthesis; S-adenosyl-L-methionine biosynthesis; S-adenosyl-L-methionine from L-methionine: step 1/1. Catalyzes the formation of S-adenosylmethionine (AdoMet) from methionine and ATP. The overall synthetic reaction is composed of two sequential steps, AdoMet formation and the subsequent tripolyphosphate hydrolysis which occurs prior to release of AdoMet from the enzyme. This Tropheryma whipplei (strain Twist) (Whipple's bacillus) protein is S-adenosylmethionine synthase.